Reading from the N-terminus, the 412-residue chain is Protein MITOFERRINLIKE 1, chloroplastic (412 aa).

The N-terminal 92 residues, 1-92 (MEARLSETLG…PGPEFLKWIK (92 aa)), are a transit peptide targeting the chloroplast. Residues 43–83 (VRNPKLKTKSSQKPPKFSANFRRSDPPFASTSISDPTHEKP) are disordered. Solcar repeat units follow at residues 112–198 (ERAI…GKSL), 206–288 (PTVL…LKAA), and 298–392 (LEPL…ARLT). The next 6 membrane-spanning stretches (helical) occupy residues 115–135 (IIGAGAGGLAGAFTYVTLLPL), 167–187 (ILGFYSGVSAVIVGSTFSSAV), 208–228 (VLIPPTAGAMGNIISSAIMVP), 262–282 (AGYSATLLRNLPAGVLSYSSF), 303–323 (SVCCGALAGAISASITTPLDV), and 365–385 (TRGMGPRVVHSACFSAIGYFA).

It belongs to the mitochondrial carrier (TC 2.A.29) family. In terms of tissue distribution, expressed in leaves, developing flowers and siliques.

The protein resides in the plastid. It localises to the chloroplast inner membrane. In terms of biological role, probably involved in iron transport into chloroplasts. The sequence is that of Protein MITOFERRINLIKE 1, chloroplastic (MFL1) from Arabidopsis thaliana (Mouse-ear cress).